Consider the following 302-residue polypeptide: Sulfate adenylyltransferase subunit 2 (302 aa).

The protein belongs to the PAPS reductase family. CysD subfamily. Heterodimer composed of CysD, the smaller subunit, and CysN.

It carries out the reaction sulfate + ATP + H(+) = adenosine 5'-phosphosulfate + diphosphate. It functions in the pathway sulfur metabolism; hydrogen sulfide biosynthesis; sulfite from sulfate: step 1/3. In terms of biological role, with CysN forms the ATP sulfurylase (ATPS) that catalyzes the adenylation of sulfate producing adenosine 5'-phosphosulfate (APS) and diphosphate, the first enzymatic step in sulfur assimilation pathway. APS synthesis involves the formation of a high-energy phosphoric-sulfuric acid anhydride bond driven by GTP hydrolysis by CysN coupled to ATP hydrolysis by CysD. The chain is Sulfate adenylyltransferase subunit 2 from Salmonella arizonae (strain ATCC BAA-731 / CDC346-86 / RSK2980).